Consider the following 165-residue polypeptide: Cyclic pyranopterin monophosphate synthase (165 aa).

Residues 76–78 (MCH) and 113–114 (IE) each bind substrate. The active site involves Asp128.

It belongs to the MoaC family. Homohexamer; trimer of dimers.

The enzyme catalyses (8S)-3',8-cyclo-7,8-dihydroguanosine 5'-triphosphate = cyclic pyranopterin phosphate + diphosphate. It functions in the pathway cofactor biosynthesis; molybdopterin biosynthesis. Catalyzes the conversion of (8S)-3',8-cyclo-7,8-dihydroguanosine 5'-triphosphate to cyclic pyranopterin monophosphate (cPMP). The protein is Cyclic pyranopterin monophosphate synthase of Limosilactobacillus fermentum (strain NBRC 3956 / LMG 18251) (Lactobacillus fermentum).